We begin with the raw amino-acid sequence, 38 residues long: GDNKPPKKGPPNGCFGHKIDRIGSHSGLGCNKVDDNKG.

Residues 1–38 are disordered; that stretch reads GDNKPPKKGPPNGCFGHKIDRIGSHSGLGCNKVDDNKG. The cysteines at positions 14 and 30 are disulfide-linked.

Belongs to the natriuretic peptide family. Expressed by the venom gland.

The protein localises to the secreted. Inhibits platelet aggregation induced by thrombin, collagen and PAF-acether. Human platelet aggregation induced by thrombin is inhibited by synthetic lebetin-1-alpha with (IC(50)=140 nM). In vivo, inhibits collagen-induced thrombocytopenia in rats. Is not toxic upon intravenous injection into mice and rats. Its function is as follows. Inhibits platelet aggregation induced by thrombin, collagen and PAF-acether. Human platelet aggregation induced by thrombin is inhibited by synthetic lebetin-1-beta with (IC(50)=32 nM). In vivo, inhibits collagen-induced thrombocytopenia in rats. Is not toxic upon intravenous injection into mice and rats. Functionally, inhibits platelet aggregation induced by thrombin, collagen and PAF-acether. Human platelet aggregation induced by thrombin is inhibited by synthetic lebetin-1-gamma with (IC(50)=5 nM). In vivo, inhibits collagen-induced thrombocytopenia in rats. Is not toxic upon intravenous injection into mice and rats. In terms of biological role, inhibits platelet aggregation induced by thrombin, collagen and PAF-acether. Human platelet aggregation induced by thrombin is inhibited by synthetic lebetin-1-alpha with (IC(50)=2.5 nM). In vivo, inhibits collagen-induced thrombocytopenia in rats. Is not toxic upon intravenous injection into mice and rats. Inhibits platelet aggregation induced by thrombin, collagen and PAF-acether. Human platelet aggregation induced by thrombin is inhibited by synthetic lebetin-1-alpha with (IC(50)=2.8 nM). In vivo, inhibits collagen-induced thrombocytopenia in rats. Is not toxic upon intravenous injection into mice and rats. This Macrovipera lebetinus (Levantine viper) protein is Lebetin-2-alpha.